Consider the following 228-residue polypeptide: DNA mismatch repair protein MutH (228 aa).

This sequence belongs to the MutH family.

Its subcellular location is the cytoplasm. Functionally, sequence-specific endonuclease that cleaves unmethylated GATC sequences. It is involved in DNA mismatch repair. The sequence is that of DNA mismatch repair protein MutH from Yersinia enterocolitica serotype O:8 / biotype 1B (strain NCTC 13174 / 8081).